We begin with the raw amino-acid sequence, 259 residues long: ATP synthase subunit a (259 aa).

5 helical membrane passes run 29-49, 89-109, 132-154, 209-229, and 230-250; these read TVNI…IWLF, LIAP…AMDL, SADV…FYSI, IFIL…NVPW, and AIFH…LTIV.

It belongs to the ATPase A chain family. As to quaternary structure, F-type ATPases have 2 components, CF(1) - the catalytic core - and CF(0) - the membrane proton channel. CF(1) has five subunits: alpha(3), beta(3), gamma(1), delta(1), epsilon(1). CF(0) has three main subunits: a(1), b(2) and c(9-12). The alpha and beta chains form an alternating ring which encloses part of the gamma chain. CF(1) is attached to CF(0) by a central stalk formed by the gamma and epsilon chains, while a peripheral stalk is formed by the delta and b chains.

The protein resides in the cell inner membrane. In terms of biological role, key component of the proton channel; it plays a direct role in the translocation of protons across the membrane. The protein is ATP synthase subunit a of Tolumonas auensis (strain DSM 9187 / NBRC 110442 / TA 4).